Here is a 281-residue protein sequence, read N- to C-terminus: Bifunctional protein FolD (281 aa).

Residues 159–161 (NRS), S184, and I225 each bind NADP(+).

This sequence belongs to the tetrahydrofolate dehydrogenase/cyclohydrolase family. As to quaternary structure, homodimer.

It catalyses the reaction (6R)-5,10-methylene-5,6,7,8-tetrahydrofolate + NADP(+) = (6R)-5,10-methenyltetrahydrofolate + NADPH. The catalysed reaction is (6R)-5,10-methenyltetrahydrofolate + H2O = (6R)-10-formyltetrahydrofolate + H(+). It functions in the pathway one-carbon metabolism; tetrahydrofolate interconversion. In terms of biological role, catalyzes the oxidation of 5,10-methylenetetrahydrofolate to 5,10-methenyltetrahydrofolate and then the hydrolysis of 5,10-methenyltetrahydrofolate to 10-formyltetrahydrofolate. The sequence is that of Bifunctional protein FolD from Thermoplasma volcanium (strain ATCC 51530 / DSM 4299 / JCM 9571 / NBRC 15438 / GSS1).